The chain runs to 99 residues: Aspartyl/glutamyl-tRNA(Asn/Gln) amidotransferase subunit C (99 aa).

It belongs to the GatC family. As to quaternary structure, heterotrimer of A, B and C subunits.

The enzyme catalyses L-glutamyl-tRNA(Gln) + L-glutamine + ATP + H2O = L-glutaminyl-tRNA(Gln) + L-glutamate + ADP + phosphate + H(+). The catalysed reaction is L-aspartyl-tRNA(Asn) + L-glutamine + ATP + H2O = L-asparaginyl-tRNA(Asn) + L-glutamate + ADP + phosphate + 2 H(+). Its function is as follows. Allows the formation of correctly charged Asn-tRNA(Asn) or Gln-tRNA(Gln) through the transamidation of misacylated Asp-tRNA(Asn) or Glu-tRNA(Gln) in organisms which lack either or both of asparaginyl-tRNA or glutaminyl-tRNA synthetases. The reaction takes place in the presence of glutamine and ATP through an activated phospho-Asp-tRNA(Asn) or phospho-Glu-tRNA(Gln). This Delftia acidovorans (strain DSM 14801 / SPH-1) protein is Aspartyl/glutamyl-tRNA(Asn/Gln) amidotransferase subunit C.